The primary structure comprises 84 residues: Large ribosomal subunit protein bL27 (84 aa).

Residues 1–22 (MAHKKAGGSTRNGRDSESKRLG) form a disordered region.

It belongs to the bacterial ribosomal protein bL27 family.

The sequence is that of Large ribosomal subunit protein bL27 from Shewanella loihica (strain ATCC BAA-1088 / PV-4).